The sequence spans 221 residues: Chaperone protein TorD (221 aa).

The protein belongs to the TorD/DmsD family. TorD subfamily.

It is found in the cytoplasm. Involved in the biogenesis of TorA. Acts on TorA before the insertion of the molybdenum cofactor and, as a result, probably favors a conformation of the apoenzyme that is competent for acquiring the cofactor. The chain is Chaperone protein TorD from Psychrobacter sp. (strain PRwf-1).